The sequence spans 118 residues: C-type natriuretic peptide 2 (118 aa).

Residues 1–22 (MHFCHIVGWGLVLAVLYLRTEA) form the signal peptide. Positions 23-96 (KPVAQAHQKS…SRKIKGINKK (74 aa)) are excised as a propeptide. A disulfide bridge connects residues C102 and C118.

This sequence belongs to the natriuretic peptide family.

The protein localises to the secreted. Exhibits natriuretic and vasodepressor activity. Has a cGMP-stimulating activity. In Aquarana catesbeiana (American bullfrog), this protein is C-type natriuretic peptide 2.